We begin with the raw amino-acid sequence, 283 residues long: Probable endonuclease 4 (283 aa).

Zn(2+) contacts are provided by histidine 69, histidine 109, glutamate 145, aspartate 179, histidine 182, histidine 216, aspartate 229, histidine 231, and glutamate 261.

The protein belongs to the AP endonuclease 2 family. Zn(2+) is required as a cofactor.

The enzyme catalyses Endonucleolytic cleavage to 5'-phosphooligonucleotide end-products.. Its function is as follows. Endonuclease IV plays a role in DNA repair. It cleaves phosphodiester bonds at apurinic or apyrimidinic (AP) sites, generating a 3'-hydroxyl group and a 5'-terminal sugar phosphate. The polypeptide is Probable endonuclease 4 (Campylobacter concisus (strain 13826)).